We begin with the raw amino-acid sequence, 440 residues long: Ribosomal protein uS12 methylthiotransferase RimO (440 aa).

The MTTase N-terminal domain maps to 8–125 (LRCHAISLGC…WNEQILLALN (118 aa)). Positions 17, 52, 87, 152, 156, and 159 each coordinate [4Fe-4S] cluster. The region spanning 138–368 (TTGKSYAWLK…MEIQLKISEK (231 aa)) is the Radical SAM core domain. In terms of domain architecture, TRAM spans 371–439 (KNFVGKRLSL…SYDLVALADS (69 aa)).

It belongs to the methylthiotransferase family. RimO subfamily. Requires [4Fe-4S] cluster as cofactor.

The protein resides in the cytoplasm. It carries out the reaction L-aspartate(89)-[ribosomal protein uS12]-hydrogen + (sulfur carrier)-SH + AH2 + 2 S-adenosyl-L-methionine = 3-methylsulfanyl-L-aspartate(89)-[ribosomal protein uS12]-hydrogen + (sulfur carrier)-H + 5'-deoxyadenosine + L-methionine + A + S-adenosyl-L-homocysteine + 2 H(+). Catalyzes the methylthiolation of an aspartic acid residue of ribosomal protein uS12. The protein is Ribosomal protein uS12 methylthiotransferase RimO of Lawsonia intracellularis (strain PHE/MN1-00).